A 325-amino-acid chain; its full sequence is Bifunctional ligase/repressor BirA (325 aa).

The segment at residues 23–42 (GQKISDALGCSRTAVWKHIE) is a DNA-binding region (H-T-H motif). The BPL/LPL catalytic domain occupies 74-262 (RFGLKTEVMG…CFEKRYRDYM (189 aa)). Residues Gln118, 122-124 (RGR), and Lys189 each bind biotin.

The protein belongs to the biotin--protein ligase family.

It carries out the reaction biotin + L-lysyl-[protein] + ATP = N(6)-biotinyl-L-lysyl-[protein] + AMP + diphosphate + H(+). Acts both as a biotin--[acetyl-CoA-carboxylase] ligase and a repressor. The protein is Bifunctional ligase/repressor BirA of Bacillus subtilis (strain 168).